Here is a 474-residue protein sequence, read N- to C-terminus: 3-isopropylmalate dehydratase large subunit (474 aa).

3 residues coordinate [4Fe-4S] cluster: C353, C414, and C417.

Belongs to the aconitase/IPM isomerase family. LeuC type 1 subfamily. Heterodimer of LeuC and LeuD. [4Fe-4S] cluster is required as a cofactor.

It carries out the reaction (2R,3S)-3-isopropylmalate = (2S)-2-isopropylmalate. Its pathway is amino-acid biosynthesis; L-leucine biosynthesis; L-leucine from 3-methyl-2-oxobutanoate: step 2/4. Catalyzes the isomerization between 2-isopropylmalate and 3-isopropylmalate, via the formation of 2-isopropylmaleate. The protein is 3-isopropylmalate dehydratase large subunit of Pseudomonas aeruginosa (strain LESB58).